The chain runs to 309 residues: tRNA N6-adenosine threonylcarbamoyltransferase (309 aa).

The Fe cation site is built by histidine 108 and histidine 112. Substrate-binding positions include leucine 130 to glycine 134, aspartate 163, glycine 176, aspartate 180, and asparagine 269. A Fe cation-binding site is contributed by aspartate 293.

It belongs to the KAE1 / TsaD family. The cofactor is Fe(2+).

The protein resides in the cytoplasm. It carries out the reaction L-threonylcarbamoyladenylate + adenosine(37) in tRNA = N(6)-L-threonylcarbamoyladenosine(37) in tRNA + AMP + H(+). Functionally, required for the formation of a threonylcarbamoyl group on adenosine at position 37 (t(6)A37) in tRNAs that read codons beginning with adenine. Is involved in the transfer of the threonylcarbamoyl moiety of threonylcarbamoyl-AMP (TC-AMP) to the N6 group of A37, together with TsaE and TsaB. TsaD likely plays a direct catalytic role in this reaction. The sequence is that of tRNA N6-adenosine threonylcarbamoyltransferase from Mycoplasmopsis agalactiae (strain NCTC 10123 / CIP 59.7 / PG2) (Mycoplasma agalactiae).